The chain runs to 93 residues: Small ribosomal subunit protein uS19 (93 aa).

It belongs to the universal ribosomal protein uS19 family.

Its function is as follows. Protein S19 forms a complex with S13 that binds strongly to the 16S ribosomal RNA. This Phytoplasma australiense protein is Small ribosomal subunit protein uS19.